A 332-amino-acid chain; its full sequence is Nucleoid-associated protein VP2128 (332 aa).

The protein belongs to the YejK family.

Its subcellular location is the cytoplasm. It is found in the nucleoid. The protein is Nucleoid-associated protein VP2128 of Vibrio parahaemolyticus serotype O3:K6 (strain RIMD 2210633).